A 215-amino-acid chain; its full sequence is 3-isopropylmalate dehydratase small subunit (215 aa).

Belongs to the LeuD family. LeuD type 1 subfamily. As to quaternary structure, heterodimer of LeuC and LeuD.

It catalyses the reaction (2R,3S)-3-isopropylmalate = (2S)-2-isopropylmalate. Its pathway is amino-acid biosynthesis; L-leucine biosynthesis; L-leucine from 3-methyl-2-oxobutanoate: step 2/4. Functionally, catalyzes the isomerization between 2-isopropylmalate and 3-isopropylmalate, via the formation of 2-isopropylmaleate. The sequence is that of 3-isopropylmalate dehydratase small subunit from Xylella fastidiosa (strain 9a5c).